The chain runs to 805 residues: DNA gyrase subunit B (805 aa).

The 116-residue stretch at 431 to 546 folds into the Toprim domain; sequence CEMYIVEGDS…NECVYIAQPP (116 aa). Positions 437, 511, and 513 each coordinate Mg(2+).

Belongs to the type II topoisomerase GyrB family. Heterotetramer, composed of two GyrA and two GyrB chains. In the heterotetramer, GyrA contains the active site tyrosine that forms a transient covalent intermediate with DNA, while GyrB binds cofactors and catalyzes ATP hydrolysis. Requires Mg(2+) as cofactor. It depends on Mn(2+) as a cofactor. The cofactor is Ca(2+).

The protein localises to the cytoplasm. It catalyses the reaction ATP-dependent breakage, passage and rejoining of double-stranded DNA.. A type II topoisomerase that negatively supercoils closed circular double-stranded (ds) DNA in an ATP-dependent manner to modulate DNA topology and maintain chromosomes in an underwound state. Negative supercoiling favors strand separation, and DNA replication, transcription, recombination and repair, all of which involve strand separation. Also able to catalyze the interconversion of other topological isomers of dsDNA rings, including catenanes and knotted rings. Type II topoisomerases break and join 2 DNA strands simultaneously in an ATP-dependent manner. In Chlamydia pneumoniae (Chlamydophila pneumoniae), this protein is DNA gyrase subunit B.